Consider the following 429-residue polypeptide: MANVTVVGAQWGDEGKGKLVDWLSHRADVVARFQGGHNAGHTLVVGENVYKLSLLPSGVVRGKLSVIGNGVVVDPWAFVAEVDRIAQQGVVITPDVVKISETATLILPIHRELDALRENRDDGEPIGTTRRGIGPAYEDKVGRRAVRVIDLADPAALKARVKDILHHHNALRRGLGHEEYSADQLVAELTEIAPKILPYAAPVWRVLKDAIKSDQKVLFEGAQGALLDVDHGTYPFVTSSNTVSGQASAGTGVGPRDVGYVLGIAKAYMTRVGEGPFPTELHDADGQMLGERGHEFGVVTGRKRRCGWFDAVITRQTLQVGGVHGVALTKLDVLDGFKTIKVCVAYEVDGERLDHLPAGKEAQAKATPVYEELQGWEGSTAGARSWADLPAEAVKYVRRIEELIECPIALVSTSPEREDVILMQDPFRS.

Residues 12 to 18 (GDEGKGK) and 40 to 42 (GHT) contribute to the GTP site. The Proton acceptor role is filled by aspartate 13. Aspartate 13 and glycine 40 together coordinate Mg(2+). IMP contacts are provided by residues 13–16 (DEGK), 38–41 (NAGH), threonine 129, arginine 143, glutamine 223, threonine 238, and arginine 302. The Proton donor role is filled by histidine 41. 298 to 304 (VVTGRKR) serves as a coordination point for substrate. Residues arginine 304, 330 to 332 (KLD), and 412 to 414 (STS) contribute to the GTP site.

The protein belongs to the adenylosuccinate synthetase family. Homodimer. The cofactor is Mg(2+).

It localises to the cytoplasm. The enzyme catalyses IMP + L-aspartate + GTP = N(6)-(1,2-dicarboxyethyl)-AMP + GDP + phosphate + 2 H(+). It functions in the pathway purine metabolism; AMP biosynthesis via de novo pathway; AMP from IMP: step 1/2. Its function is as follows. Plays an important role in the de novo pathway of purine nucleotide biosynthesis. Catalyzes the first committed step in the biosynthesis of AMP from IMP. The sequence is that of Adenylosuccinate synthetase from Maricaulis maris (strain MCS10) (Caulobacter maris).